The primary structure comprises 62 residues: Large ribosomal subunit protein bL28 (62 aa).

Belongs to the bacterial ribosomal protein bL28 family.

The protein is Large ribosomal subunit protein bL28 of Parafrankia sp. (strain EAN1pec).